Here is a 333-residue protein sequence, read N- to C-terminus: Fructose-1,6-bisphosphatase class 1 1 (333 aa).

Glu-81, Asp-100, Leu-102, and Asp-103 together coordinate Mg(2+). Substrate is bound by residues Asp-103–Ser-106 and Asn-191. Mg(2+) is bound at residue Glu-263.

This sequence belongs to the FBPase class 1 family. In terms of assembly, homotetramer. Mg(2+) is required as a cofactor.

It is found in the cytoplasm. It carries out the reaction beta-D-fructose 1,6-bisphosphate + H2O = beta-D-fructose 6-phosphate + phosphate. Its pathway is carbohydrate biosynthesis; gluconeogenesis. Its activity is regulated as follows. Fructose-1,6-bisphosphatase II is not light-activated. The chain is Fructose-1,6-bisphosphatase class 1 1 from Cereibacter sphaeroides (Rhodobacter sphaeroides).